The primary structure comprises 326 residues: Ribosomal RNA small subunit methyltransferase H (326 aa).

S-adenosyl-L-methionine contacts are provided by residues 35 to 37 (GGY), Asp-53, Phe-80, Asp-101, and Gln-108. Residues 260–306 (EGVSRHLPQASNAGAGNPPPSFQAVSRRAVKPLDAETRVNPRSRSAR) form a disordered region.

The protein belongs to the methyltransferase superfamily. RsmH family.

The protein localises to the cytoplasm. It catalyses the reaction cytidine(1402) in 16S rRNA + S-adenosyl-L-methionine = N(4)-methylcytidine(1402) in 16S rRNA + S-adenosyl-L-homocysteine + H(+). Functionally, specifically methylates the N4 position of cytidine in position 1402 (C1402) of 16S rRNA. This chain is Ribosomal RNA small subunit methyltransferase H, found in Rhodospirillum rubrum (strain ATCC 11170 / ATH 1.1.1 / DSM 467 / LMG 4362 / NCIMB 8255 / S1).